Here is an 89-residue protein sequence, read N- to C-terminus: Co-chaperonin GroES (89 aa).

It belongs to the GroES chaperonin family. In terms of assembly, heptamer of 7 subunits arranged in a ring. Interacts with the chaperonin GroEL.

The protein resides in the cytoplasm. In terms of biological role, together with the chaperonin GroEL, plays an essential role in assisting protein folding. The GroEL-GroES system forms a nano-cage that allows encapsulation of the non-native substrate proteins and provides a physical environment optimized to promote and accelerate protein folding. GroES binds to the apical surface of the GroEL ring, thereby capping the opening of the GroEL channel. The chain is Co-chaperonin GroES from Parabacteroides distasonis (strain ATCC 8503 / DSM 20701 / CIP 104284 / JCM 5825 / NCTC 11152).